The chain runs to 156 residues: Transcription antitermination protein NusB (156 aa).

It belongs to the NusB family.

Its function is as follows. Involved in transcription antitermination. Required for transcription of ribosomal RNA (rRNA) genes. Binds specifically to the boxA antiterminator sequence of the ribosomal RNA (rrn) operons. The polypeptide is Transcription antitermination protein NusB (Bartonella tribocorum (strain CIP 105476 / IBS 506)).